Consider the following 346-residue polypeptide: MKPRIVLKSSSLMPSWDRPVLPGAPGCELAGGVARAHPIKHGVVVDWDALEGLWERLMVGGLQVHPEQWPVLVSDSPSAPPKGREKVAELLFEALTVPACHMANTALLALCSIGAFSGLAVEAGAGVCHATPIYAGHSWHKATFRLNVAGSTLSRYFRDLLVAACPDLQLQGLSRKTVTQLKKRCCYVSLDFQGDICDPARHQRACFCLGNGCYVRLGSERFRCPEPIFQPSLLGHPEPGLPTLAFQALQKIPTTLRTRLANTVVLAGGSTLFPGFVERMNLELEAQCRRHGYPALQPCLVAHPGRDTAVWTGGSMMASLNSFQCRWMTRAMYQEHGPLLVRDVFD.

Belongs to the actin family.

The polypeptide is Actin-like protein 10 (Actl10) (Mus musculus (Mouse)).